A 56-amino-acid polypeptide reads, in one-letter code: Photosystem II reaction center protein K (56 aa).

Residues 1-19 (MLNFLLQNTFVLWSNFILC) constitute a propeptide that is removed on maturation. Residues 35–55 (MPVIPVFFFLLAFVWQAAVSF) form a helical membrane-spanning segment.

Belongs to the PsbK family. As to quaternary structure, PSII is composed of 1 copy each of membrane proteins PsbA, PsbB, PsbC, PsbD, PsbE, PsbF, PsbH, PsbI, PsbJ, PsbK, PsbL, PsbM, PsbT, PsbX, PsbY, PsbZ, Psb30/Ycf12, at least 3 peripheral proteins of the oxygen-evolving complex and a large number of cofactors. It forms dimeric complexes.

It is found in the plastid. It localises to the chloroplast thylakoid membrane. In terms of biological role, one of the components of the core complex of photosystem II (PSII). PSII is a light-driven water:plastoquinone oxidoreductase that uses light energy to abstract electrons from H(2)O, generating O(2) and a proton gradient subsequently used for ATP formation. It consists of a core antenna complex that captures photons, and an electron transfer chain that converts photonic excitation into a charge separation. The sequence is that of Photosystem II reaction center protein K from Welwitschia mirabilis (Tree tumbo).